The chain runs to 208 residues: N-(5'-phosphoribosyl)anthranilate isomerase (208 aa).

Belongs to the TrpF family.

The enzyme catalyses N-(5-phospho-beta-D-ribosyl)anthranilate = 1-(2-carboxyphenylamino)-1-deoxy-D-ribulose 5-phosphate. It functions in the pathway amino-acid biosynthesis; L-tryptophan biosynthesis; L-tryptophan from chorismate: step 3/5. This chain is N-(5'-phosphoribosyl)anthranilate isomerase, found in Neisseria meningitidis serogroup A / serotype 4A (strain DSM 15465 / Z2491).